The sequence spans 341 residues: Methionine import ATP-binding protein MetN 1 (341 aa).

The 240-residue stretch at isoleucine 2–valine 241 folds into the ABC transporter domain. An ATP-binding site is contributed by glycine 38–serine 45.

It belongs to the ABC transporter superfamily. Methionine importer (TC 3.A.1.24) family. The complex is composed of two ATP-binding proteins (MetN), two transmembrane proteins (MetI) and a solute-binding protein (MetQ).

The protein localises to the cell membrane. It carries out the reaction L-methionine(out) + ATP + H2O = L-methionine(in) + ADP + phosphate + H(+). The catalysed reaction is D-methionine(out) + ATP + H2O = D-methionine(in) + ADP + phosphate + H(+). Functionally, part of the ABC transporter complex MetNIQ involved in methionine import. Responsible for energy coupling to the transport system. This Staphylococcus aureus (strain Mu50 / ATCC 700699) protein is Methionine import ATP-binding protein MetN 1.